We begin with the raw amino-acid sequence, 340 residues long: Uroporphyrinogen decarboxylase (340 aa).

Substrate-binding positions include 23–27 (RQAGR), aspartate 72, tyrosine 147, threonine 202, and histidine 316.

Belongs to the uroporphyrinogen decarboxylase family. In terms of assembly, homodimer.

It is found in the cytoplasm. The catalysed reaction is uroporphyrinogen III + 4 H(+) = coproporphyrinogen III + 4 CO2. The protein operates within porphyrin-containing compound metabolism; protoporphyrin-IX biosynthesis; coproporphyrinogen-III from 5-aminolevulinate: step 4/4. Catalyzes the decarboxylation of four acetate groups of uroporphyrinogen-III to yield coproporphyrinogen-III. This is Uroporphyrinogen decarboxylase from Geobacter metallireducens (strain ATCC 53774 / DSM 7210 / GS-15).